Reading from the N-terminus, the 293-residue chain is Aquaporin-6 (293 aa).

The Cytoplasmic segment spans residues 1–22; that stretch reads MEPGLCSRAYLLVGGLWTAISK. Residues 23–43 form a helical membrane-spanning segment; that stretch reads ALFAEFLATGLYVFFGVGSVL. Residues 44–51 lie on the Extracellular side of the membrane; the sequence is PWPVALPS. Residues 52 to 70 form a helical membrane-spanning segment; the sequence is VLQIAITFNLATATAVQIS. Residues 71–75 are Cytoplasmic-facing; the sequence is WKTSG. Residues 76 to 85 constitute an intramembrane region (discontinuously helical); the sequence is AHANPAVTLA. The NPA 1 motif lies at 79 to 81; sequence NPA. The Cytoplasmic segment spans residues 86–96; that stretch reads YLVGSHISLPR. The helical transmembrane segment at 97–118 threads the bilayer; sequence AMAYIAAQLAGATAGAALLYGV. The Extracellular segment spans residues 119 to 138; the sequence is TPGGIRETLGVNVVHNSTST. N-linked (GlcNAc...) asparagine glycosylation is present at N134. Residues 139–159 traverse the membrane as a helical segment; the sequence is GQAVAVELVLTLQLVLCVFAS. At 160 to 165 the chain is on the cytoplasmic side; it reads MDGRQT. The chain crosses the membrane as a helical span at residues 166 to 185; it reads LASPAAMIGTSVALGHLIGI. Topologically, residues 186-189 are extracellular; it reads YFTG. The discontinuously helical intramembrane region spans 190 to 202; the sequence is CSMNPARSFGPAV. The short motif at 193–195 is the NPA 2 element; the sequence is NPA. The Extracellular portion of the chain corresponds to 203–210; sequence IVGKFAVH. A helical membrane pass occupies residues 211–231; sequence WIFWVGPLTGAVLASLIYNFI. At 232–293 the chain is on the cytoplasmic side; sequence LFPDTKTVAQ…RSFSFTLGLC (62 aa).

It belongs to the MIP/aquaporin (TC 1.A.8) family. In terms of assembly, homotetramer; each monomer provides an independent solute pore.

It is found in the cytoplasmic vesicle membrane. The catalysed reaction is nitrate(in) = nitrate(out). It carries out the reaction iodide(out) = iodide(in). The enzyme catalyses bromide(in) = bromide(out). It catalyses the reaction chloride(in) = chloride(out). The catalysed reaction is Na(+)(in) = Na(+)(out). It carries out the reaction H2O(in) = H2O(out). The enzyme catalyses CO2(out) = CO2(in). It catalyses the reaction NH4(+)(in) = NH4(+)(out). Functionally, aquaporins form homotetrameric transmembrane channels, with each monomer independently mediating water transport across the plasma membrane along its osmotic gradient. Unlike classical aquaporins, AQP6 is an intracellular channel with selective anion permeability, particularly for nitrate, and exhibits very low water permeability. It may also facilitate the transport of gases, such as CO2 and NH4(+), as demonstrated in vitro. This Mus musculus (Mouse) protein is Aquaporin-6.